A 365-amino-acid chain; its full sequence is MSNNPTFGVEEEFLLVDPRTGEPIARNKAVAETAAAKGVDLQLELTSCQVETATEVMDNSDDLRKALLRLRRVATDAAETNGARLLAAGLPPTVPHKFPITPTPRYRRIGHRFGMIAHEQGICGCHVHVEVPSRDAAIRVSNRLRPWLHLLLALTANSAIYRGSDSGYATFRSVLWARWPSAGPPPFFDSEAQYDATVAMLEDAGAALDDGMIYWDVRPSNKFPTVEVRVSDVPATVAETVLFATLVRAAVMTATEAEKNGEPVVPLTDYVLKAAYWKSARDGLDGRTIDLAESHAVAPTVELLTNFVEHLRPALEQLGEYDTVRGELARVIETGNGAMRQRRAFERRREAADVIDELAAATIAE.

Belongs to the glutamate--cysteine ligase type 2 family. YbdK subfamily.

It catalyses the reaction L-cysteine + L-glutamate + ATP = gamma-L-glutamyl-L-cysteine + ADP + phosphate + H(+). Functionally, ATP-dependent carboxylate-amine ligase which exhibits weak glutamate--cysteine ligase activity. The polypeptide is Putative glutamate--cysteine ligase 2-3 (Mycolicibacterium smegmatis (strain ATCC 700084 / mc(2)155) (Mycobacterium smegmatis)).